The chain runs to 429 residues: MKLQKPKGTQDILPAESAKWQYVEGFAREIFKRYNYAEVRTPIFEHYEVISRSVGDTTDIVTKEMYDFYDKGDRHITLRPEGTAPVVRSYVENKLFAPEVQKPSKFYYMGPMFRYERPQAGRLRQFHQIGVECFGSSNPATDVETIAMAAHFLKEIGIQGVKLHLNTLGNPESRAAYRQALIDYLTPLKETLSKDSQRRLEENPLRVLDSKEKEDKVAVENAPSILDFLDEESQTHFDAVRQMLENLGVDYIIDTNMVRGLDYYNHTIFEFITEIEGNDLTVCAGGRYDGLVAYFGGPETAGFGFGLGVERLLLILEKQGVALPIENALDVYIAVLGDGANVKALELVQALRQQGFKAERDYLNRKLKAQFKSADVFAAKTLITLGESEVESGQVTVKNNQTREEVQVSLETISQNFSEIFEKLGFYTQ.

Belongs to the class-II aminoacyl-tRNA synthetase family. As to quaternary structure, homodimer.

The protein resides in the cytoplasm. It catalyses the reaction tRNA(His) + L-histidine + ATP = L-histidyl-tRNA(His) + AMP + diphosphate + H(+). This Streptococcus pneumoniae serotype 2 (strain D39 / NCTC 7466) protein is Histidine--tRNA ligase.